Reading from the N-terminus, the 107-residue chain is Quaternary ammonium compound-resistance protein QacH (107 aa).

4 consecutive transmembrane segments (helical) span residues 1-21 (MPYL…AFLK), 26-46 (FSKL…FYFL), 57-77 (ITYA…SVLI), and 84-104 (LISI…NTFG).

The protein belongs to the drug/metabolite transporter (DMT) superfamily. Small multidrug resistance (SMR) (TC 2.A.7.1) family.

The protein localises to the cell membrane. Multidrug exporter. Is implicated for the resistance to bacteriocidal quaternary ammonium compounds. This chain is Quaternary ammonium compound-resistance protein QacH (qacH), found in Staphylococcus saprophyticus.